The following is a 206-amino-acid chain: Small ribosomal subunit protein uS4 (206 aa).

The segment at 18–44 (NIWGRPKSPVNRREYGPGQHGQRRKGK) is disordered. Positions 94 to 157 (RRLDAVVYRA…KQLAVVLEAV (64 aa)) constitute an S4 RNA-binding domain.

This sequence belongs to the universal ribosomal protein uS4 family. As to quaternary structure, part of the 30S ribosomal subunit. Contacts protein S5. The interaction surface between S4 and S5 is involved in control of translational fidelity.

One of the primary rRNA binding proteins, it binds directly to 16S rRNA where it nucleates assembly of the body of the 30S subunit. Functionally, with S5 and S12 plays an important role in translational accuracy. This Jannaschia sp. (strain CCS1) protein is Small ribosomal subunit protein uS4.